A 735-amino-acid polypeptide reads, in one-letter code: Catalase-peroxidase (735 aa).

Residues 1–25 form a disordered region; sequence MSDSKCPVTGKSSRQVAGGGTSNRD. Residues 95 to 223 constitute a cross-link (tryptophyl-tyrosyl-methioninium (Trp-Tyr) (with M-249)); that stretch reads WHSAGTYRMG…LAAVQMGLIY (129 aa). Residue His96 is the Proton acceptor of the active site. Residues 223–249 constitute a cross-link (tryptophyl-tyrosyl-methioninium (Tyr-Met) (with W-95)); the sequence is YINPEGPDGNPDPVASGRDVRETFARM. Residue His264 participates in heme b binding.

It belongs to the peroxidase family. Peroxidase/catalase subfamily. In terms of assembly, homodimer or homotetramer. Heme b is required as a cofactor. Formation of the three residue Trp-Tyr-Met cross-link is important for the catalase, but not the peroxidase activity of the enzyme.

The enzyme catalyses H2O2 + AH2 = A + 2 H2O. It catalyses the reaction 2 H2O2 = O2 + 2 H2O. Bifunctional enzyme with both catalase and broad-spectrum peroxidase activity. In Trichlorobacter lovleyi (strain ATCC BAA-1151 / DSM 17278 / SZ) (Geobacter lovleyi), this protein is Catalase-peroxidase.